A 303-amino-acid chain; its full sequence is Probable 5-dehydro-4-deoxyglucarate dehydratase (303 aa).

This sequence belongs to the DapA family.

It catalyses the reaction 5-dehydro-4-deoxy-D-glucarate + H(+) = 2,5-dioxopentanoate + CO2 + H2O. It functions in the pathway carbohydrate acid metabolism; D-glucarate degradation; 2,5-dioxopentanoate from D-glucarate: step 2/2. The chain is Probable 5-dehydro-4-deoxyglucarate dehydratase from Pseudomonas putida (strain W619).